The following is a 517-amino-acid chain: Aldehyde dehydrogenase X, mitochondrial (517 aa).

A mitochondrion-targeting transit peptide spans 1-17 (MLRFLAPRLLSLQGRTA). Lys51 bears the N6-acetyllysine mark. Lys52 is subject to N6-acetyllysine; alternate. At Lys52 the chain carries N6-succinyllysine; alternate. The residue at position 81 (Lys81) is an N6-succinyllysine. Position 262 to 267 (262 to 267 (GSTEVG)) interacts with NAD(+). Residue Glu285 is the Proton acceptor of the active site. Cys319 functions as the Nucleophile in the catalytic mechanism. An N6-acetyllysine; alternate mark is found at Lys364, Lys383, Lys399, Lys414, and Lys426. 5 positions are modified to N6-succinyllysine; alternate: Lys364, Lys383, Lys399, Lys414, and Lys426. An N6-acetyllysine modification is found at Lys429.

The protein belongs to the aldehyde dehydrogenase family. Homotetramer. Liver, testis and to a lesser extent in brain.

It localises to the mitochondrion matrix. The enzyme catalyses an aldehyde + NAD(+) + H2O = a carboxylate + NADH + 2 H(+). The protein operates within alcohol metabolism; ethanol degradation; acetate from ethanol: step 2/2. In terms of biological role, ALDHs play a major role in the detoxification of alcohol-derived acetaldehyde. They are involved in the metabolism of corticosteroids, biogenic amines, neurotransmitters, and lipid peroxidation. In Homo sapiens (Human), this protein is Aldehyde dehydrogenase X, mitochondrial (ALDH1B1).